The following is a 392-amino-acid chain: MISPFIVNDKNLFLSRFPVSQVNRSLQAWDSADEYLINHVHDQNLINAQTKVAIFNDAFGALAVNFCQSTSENPEVISINDSYISSEGASYNIEQNSLDDSHFTQLNSLDSLPNNIDVILYKIPKSKSLLIEQLIQIKKSVNENCIFIAADRAKEIHSSTLKVFEKHLGTTKTSLAVKKARLVFCQFDNKQVHQSPFPTVWSIPHKSTNDLPSRELTISNHANVYAREKLDIGARYFIENLPTVAANSTVIDLGCGNGVIGLTVLANQPEAHVQFIDESTMAISSAKQNIMTNLPDVIEQCEFTLNDSLTDIEGGSVDLILCNPPFHQNTATTDHIAWQMFKDSHRVLKKGGELRIIGNQKLAYHIKLQRLFGNETLIASNDKFVTQSAIKR.

It belongs to the methyltransferase superfamily. RlmG family.

The protein resides in the cytoplasm. It catalyses the reaction guanosine(1835) in 23S rRNA + S-adenosyl-L-methionine = N(2)-methylguanosine(1835) in 23S rRNA + S-adenosyl-L-homocysteine + H(+). In terms of biological role, specifically methylates the guanine in position 1835 (m2G1835) of 23S rRNA. This Colwellia psychrerythraea (strain 34H / ATCC BAA-681) (Vibrio psychroerythus) protein is Ribosomal RNA large subunit methyltransferase G.